The chain runs to 302 residues: Heme A synthase (302 aa).

Residues 1–6 (MNKALK) are Cytoplasmic-facing. Residues 7 to 27 (GLGIITTIAMLFVLIGGALVT) form a helical membrane-spanning segment. Topologically, residues 28 to 61 (KTGSGMGCGRSWPLCNGSIFPALTLESIIEWSHR) are extracellular. Cysteine 35 and cysteine 42 are joined by a disulfide. Glutamate 57 is a catalytic residue. Histidine 60 provides a ligand contact to heme o. Residues 62-82 (FVSGTSGVLVLALAIWTWKKI) traverse the membrane as a helical segment. Residues 83–91 (GHIRETKFL) are Cytoplasmic-facing. A helical transmembrane segment spans residues 92–112 (AVMSVVFLILQALLGAAAVVF). Residues 113 to 120 (GSSALIMA) lie on the Extracellular side of the membrane. A helical membrane pass occupies residues 121-141 (LHFGISLISFASVLLLTLLVF). Histidine 122 lines the heme o pocket. Topologically, residues 142–158 (EADSKQKSESFYIGKTM) are cytoplasmic. The helical transmembrane segment at 159-179 (QFHMIGIIIYTYVVVYTGAYV) threads the bilayer. The Extracellular portion of the chain corresponds to 180–208 (RHTSSSLACLDFPMCSTENGWLPGKFHEW). Cysteines 188 and 194 form a disulfide. Residues 209-229 (VQMGHRAAALLLFAWIIAAAV) traverse the membrane as a helical segment. A heme b-binding site is contributed by histidine 213. Residues 230–242 (HAARQYKNQKRIY) are Cytoplasmic-facing. Residues 243–263 (WGWMISLILIILQAASGIAVV) traverse the membrane as a helical segment. Over 264 to 272 (YSRLDLGFA) the chain is Extracellular. A helical membrane pass occupies residues 273–293 (LAHAFFISCLFGILCYFLLLV). A heme b-binding site is contributed by histidine 275. Residues 294-302 (ARYRRQVQK) lie on the Cytoplasmic side of the membrane.

It belongs to the COX15/CtaA family. Type 1 subfamily. As to quaternary structure, interacts with CtaB. Requires heme b as cofactor.

It localises to the cell membrane. It carries out the reaction Fe(II)-heme o + 2 A + H2O = Fe(II)-heme a + 2 AH2. The protein operates within porphyrin-containing compound metabolism; heme A biosynthesis; heme A from heme O: step 1/1. Its function is as follows. Catalyzes the conversion of heme O to heme A by two successive hydroxylations of the methyl group at C8. The first hydroxylation forms heme I, the second hydroxylation results in an unstable dihydroxymethyl group, which spontaneously dehydrates, resulting in the formyl group of heme A. The sequence is that of Heme A synthase from Bacillus licheniformis (strain ATCC 14580 / DSM 13 / JCM 2505 / CCUG 7422 / NBRC 12200 / NCIMB 9375 / NCTC 10341 / NRRL NRS-1264 / Gibson 46).